The primary structure comprises 722 residues: Golgin subfamily A member 5 (722 aa).

At 1 to 689 the chain is on the cytoplasmic side; it reads MSWFTDLAGR…IFLRRYPIAR (689 aa). 2 disordered regions span residues 90 to 158 and 194 to 215; these read TRSS…VKPI and TLSDSGSSASLSTTGDPKSHEL. Over residues 91–109 the composition is skewed to low complexity; sequence RSSIESSHNSSVNVSSHRS. Residues 134 to 148 show a composition bias toward basic and acidic residues; it reads DKVHSSSQKETRKES. The segment covering 149-158 has biased composition (polar residues); that stretch reads ASVNQAVKPI. The segment covering 195–209 has biased composition (low complexity); it reads LSDSGSSASLSTTGD. A coiled-coil region spans residues 211–622; it reads KSHELSNLRL…LEHQLKNVQG (412 aa). Residues 690 to 710 form a helical; Anchor for type IV membrane protein membrane-spanning segment; the sequence is VFIIIYMALLHLWVMIVLLTY. Residues 711–722 are Lumenal-facing; the sequence is TPEMHHDTPSGK.

The protein localises to the golgi apparatus membrane. Its function is as follows. Involved in maintaining Golgi structure. Stimulates the formation of Golgi stacks and ribbons. Involved in intra-Golgi retrograde transport. This is Golgin subfamily A member 5 (golga5) from Xenopus laevis (African clawed frog).